Reading from the N-terminus, the 212-residue chain is Ribonuclease HII (212 aa).

In terms of domain architecture, RNase H type-2 spans 1 to 206 (MILVGIDEAG…LQDIAPNYYI (206 aa)). A divalent metal cation contacts are provided by Asp-7, Glu-8, and Asp-104.

The protein belongs to the RNase HII family. Mn(2+) is required as a cofactor. The cofactor is Mg(2+).

It is found in the cytoplasm. It catalyses the reaction Endonucleolytic cleavage to 5'-phosphomonoester.. Functionally, endonuclease that specifically degrades the RNA of RNA-DNA hybrids. The chain is Ribonuclease HII from Sulfolobus acidocaldarius (strain ATCC 33909 / DSM 639 / JCM 8929 / NBRC 15157 / NCIMB 11770).